The chain runs to 665 residues: Phenol hydroxylase (665 aa).

Residues 18–19, 43–45, 51–56, Gln-118, Tyr-290, Asp-358, and 368–372 each bind FAD; these read PA, DKR, NGQADG, and GQGMN. Asp-55 serves as a coordination point for substrate. Tyr-290 is a binding site for substrate.

The protein belongs to the PheA/TfdB FAD monooxygenase family. As to quaternary structure, homodimer. It depends on FAD as a cofactor.

The enzyme catalyses phenol + NADPH + O2 + H(+) = catechol + NADP(+) + H2O. It participates in aromatic compound metabolism; phenol degradation. With respect to regulation, inhibited by excess phenol. Heavy metals such AsCuSO(4), AgNO(3), or HgCl(2) severely inhibit activity. Functionally, hydroxylates phenol to catechol. Phenol is the best substrate, but the enzyme also accepts isomeric diphenols, hydroxyl-, amino-, halogen- or methyl-substituted phenols and, to a lesser degree, cresols. The polypeptide is Phenol hydroxylase (Cutaneotrichosporon cutaneum (Yeast)).